A 329-amino-acid polypeptide reads, in one-letter code: Tyrosine recombinase XerC 1 (329 aa).

The region spanning 14–101 is the Core-binding (CB) domain; the sequence is APPHPQIGAY…AWRGWYQWLA (88 aa). A Tyr recombinase domain is found at 123–320; that stretch reads RLPKALSVEQ…DFQHLAKIYD (198 aa). Active-site residues include Arg-163, Lys-198, His-272, Arg-275, and His-298. The O-(3'-phospho-DNA)-tyrosine intermediate role is filled by Tyr-307.

Belongs to the 'phage' integrase family. XerC subfamily. As to quaternary structure, forms a cyclic heterotetrameric complex composed of two molecules of XerC and two molecules of XerD.

It is found in the cytoplasm. Site-specific tyrosine recombinase, which acts by catalyzing the cutting and rejoining of the recombining DNA molecules. The XerC-XerD complex is essential to convert dimers of the bacterial chromosome into monomers to permit their segregation at cell division. It also contributes to the segregational stability of plasmids. The polypeptide is Tyrosine recombinase XerC 1 (xerC1) (Ralstonia nicotianae (strain ATCC BAA-1114 / GMI1000) (Ralstonia solanacearum)).